Consider the following 567-residue polypeptide: Organic cation transporter-like protein (567 aa).

Topologically, residues 1–21 (MGYDEAIIHLGDFGRYQKIIY) are cytoplasmic. Residues 22–42 (FLICLTSIPVAFHKLAGVFLL) form a helical membrane-spanning segment. At 43-127 (AKPDFRCALP…TEWNLVCGRD (85 aa)) the chain is on the extracellular side. Asn55, Asn67, Asn89, and Asn97 each carry an N-linked (GlcNAc...) asparagine glycan. A helical membrane pass occupies residues 128–148 (FMAATSDSLFMLGVLLGSIVF). The Cytoplasmic segment spans residues 149-158 (GQLSDKYGRK). Residues 159 to 179 (PILFASLVIQVLFGVLAGVAP) form a helical membrane-spanning segment. The Extracellular segment spans residues 180–189 (EYFTYTFARL). Residues 190–210 (MVGATTSGVFLVAYVVAMEMV) form a helical membrane-spanning segment. Residues 211 to 219 (GPDKRLYAG) are Cytoplasmic-facing. Residues 220-240 (IFVMMFFSVGFMLTAVFAYFV) form a helical membrane-spanning segment. The Extracellular segment spans residues 241–244 (HDWR). Residues 245–265 (WLQIALTLPGLIFMFYYWIIP) form a helical membrane-spanning segment. The Cytoplasmic portion of the chain corresponds to 266 to 343 (ESARWLLLKG…LFCYPNLRRK (78 aa)). The segment at 304-326 (LDEGENSEEKAKQKLEDQELDEG) is disordered. A compositionally biased stretch (basic and acidic residues) spans 310–320 (SEEKAKQKLED). Residues 344-364 (TLLIFLDWLVTSGVYYGLSWN) traverse the membrane as a helical segment. The Extracellular portion of the chain corresponds to 365–371 (TSNLGGN). Residues 372–392 (VLLNFVISGAVEIPAYIFLLL) form a helical membrane-spanning segment. Over 393–400 (TLNRWGRR) the chain is Cytoplasmic. Residues 401-421 (SILCGCLVMAGLSLLATVIIP) traverse the membrane as a helical segment. At 422–427 (QRMHTL) the chain is on the extracellular side. The helical transmembrane segment at 428–448 (IVACAMLGKLAITASYGTVYI) threads the bilayer. The Cytoplasmic portion of the chain corresponds to 449–462 (FSAEQFPTVVRNVA). Residues 463–483 (LGAASMVARISGMMAPFLNFL) traverse the membrane as a helical segment. Topologically, residues 484-489 (ATIWKP) are extracellular. The helical transmembrane segment at 490-510 (LPLLICGSLTLVAGLLSLLLP) threads the bilayer. At 511–567 (ETHNKPMLETIADGERFGKKTKADVYLETGQELRAPEAQPLKGSGETNGSTIANGHK) the chain is on the cytoplasmic side. Residues 546–567 (PEAQPLKGSGETNGSTIANGHK) form a disordered region. Positions 555 to 567 (GETNGSTIANGHK) are enriched in polar residues.

It belongs to the major facilitator (TC 2.A.1) superfamily. Organic cation transporter (TC 2.A.1.19) family.

Its subcellular location is the membrane. Its function is as follows. Probably transports organic cations. This chain is Organic cation transporter-like protein (Orct2), found in Drosophila melanogaster (Fruit fly).